We begin with the raw amino-acid sequence, 239 residues long: MNPNPQSTSSNFHQTELDKFAALANRWWDADGPQKPLHALNPVRLDYVAARVALPGARVLDVGCGGGLLSEAMARLGAQVTAIDLAPELVKVARLHSLESSVQVDYRVQSVEDLAAEQPGSFDAVTCMEMLEHVPDPLAIIRACASLLKPGGTLFLSTLNRTPAAFALAVVGAEYIARLLPKGTHHYKDFIKPSELAAWLRTAELQLQDVSGMLYEPWRNRARLSSRTEVNYLACAVKP.

Residues R44, G63, D84, and M128 each coordinate S-adenosyl-L-methionine.

The protein belongs to the methyltransferase superfamily. UbiG/COQ3 family.

The enzyme catalyses a 3-demethylubiquinol + S-adenosyl-L-methionine = a ubiquinol + S-adenosyl-L-homocysteine + H(+). It catalyses the reaction a 3-(all-trans-polyprenyl)benzene-1,2-diol + S-adenosyl-L-methionine = a 2-methoxy-6-(all-trans-polyprenyl)phenol + S-adenosyl-L-homocysteine + H(+). Its pathway is cofactor biosynthesis; ubiquinone biosynthesis. Its function is as follows. O-methyltransferase that catalyzes the 2 O-methylation steps in the ubiquinone biosynthetic pathway. The sequence is that of Ubiquinone biosynthesis O-methyltransferase from Xanthomonas campestris pv. campestris (strain 8004).